The chain runs to 116 residues: MSKYAIIETGGQQLRVEPGRFYNIRHFVSLTPNELEQNTKILIYRVLMIRQESTIKMGHPWLKGAIVKGRILHSCLEKKITIYKMISKKKTRRKLGHRQKSTRFIVDSIFLNGKEI.

The protein belongs to the bacterial ribosomal protein bL21 family. In terms of assembly, part of the 50S ribosomal subunit.

The protein resides in the plastid. The protein localises to the chloroplast. Functionally, this protein binds to 23S rRNA. This Marchantia polymorpha (Common liverwort) protein is Large ribosomal subunit protein bL21c.